The chain runs to 278 residues: Envelope glycoprotein L (278 aa).

A signal peptide spans 1–32 (MCRRPDCGFSFSPGPVILLWCCLLLSIVSSAA). The 214-residue stretch at 43-256 (VPAECPELTR…DKYYAGLPPE (214 aa)) folds into the gL betaherpesvirus-type domain. A disulfide bond links cysteine 154 and cysteine 159.

Belongs to the herpesviridae glycoprotein L (gL) family. Betaherpesvirinae gL subfamily. In terms of assembly, interacts with glycoprotein H (gH); this interaction is necessary for the correct processing and cell surface expression of gH. Forms the envelope pentamer complex (PC) composed of gH, gL, UL128, UL130, and UL131A. The pentamer interacts with host NRP2. Forms the envelope trimer complex composed of gH, gL, and gO. The trimer interacts with host PDGFRA. The trimer also interacts with host EPHA2.

Its subcellular location is the virion membrane. It localises to the host cell membrane. The protein localises to the host Golgi apparatus. It is found in the host trans-Golgi network. In terms of biological role, the heterodimer glycoprotein H-glycoprotein L is required for the fusion of viral and plasma membranes leading to virus entry into the host cell. Acts as a functional inhibitor of gH and maintains gH in an inhibited form. Upon binding to host integrins, gL dissociates from gH leading to activation of the viral fusion glycoproteins gB and gH. In human cytomegalovirus, forms two distincts complexes to mediate viral entry, a trimer and a pentamer at the surface of the virion envelope. The gH-gL-gO trimer is required for infection in fibroblasts by interacting with host PDGFRA, and in glioblastoma cells by interacting with host EPHA2. The gH-gL-UL128-UL130-UL131A pentamer is essential for viral entry in epithelial, endothelial and myeloid cells via interaction with host NRP2. The chain is Envelope glycoprotein L from Human cytomegalovirus (strain 119) (HHV-5).